Consider the following 158-residue polypeptide: Rhombotin-2 (158 aa).

2 consecutive LIM zinc-binding domains span residues 30 to 89 (CGGC…RLFG) and 94 to 153 (CASC…EWTK).

In terms of assembly, interacts via its LIM domains with ELF2 and LDB1. Interacts with BEX2 and KDM5A. Also interacts with basic helix-loop-helix protein TAL1/SCL and can assemble in a complex with LMO2 and TAL1/SCL.

It is found in the nucleus. In terms of biological role, acts with TAL1/SCL to regulate red blood cell development. Also acts with LDB1 to maintain erythroid precursors in an immature state. The polypeptide is Rhombotin-2 (LMO2) (Bos taurus (Bovine)).